A 204-amino-acid chain; its full sequence is Ribonuclease HII (204 aa).

The RNase H type-2 domain maps to Glu-16–Lys-204. Residues Asp-22, Glu-23, and Asp-120 each coordinate a divalent metal cation.

The protein belongs to the RNase HII family. The cofactor is Mn(2+). Mg(2+) serves as cofactor.

It localises to the cytoplasm. It carries out the reaction Endonucleolytic cleavage to 5'-phosphomonoester.. Its function is as follows. Endonuclease that specifically degrades the RNA of RNA-DNA hybrids. This is Ribonuclease HII from Alkaliphilus metalliredigens (strain QYMF).